Consider the following 2541-residue polypeptide: Talin-1 (2541 aa).

The 318-residue stretch at 86-403 folds into the FERM domain; the sequence is RPLKIRMLDG…GYIDIILKKK (318 aa). The segment at 280–435 is interaction with LAYN; the sequence is FMAHKNCGNM…PKKSTVLQQQ (156 aa). Residues 482-655 are helical bundle R1; sequence RGHMPPLTSA…QTSGELLQQI (174 aa). The segment at 656–786 is helical bundle R2; sequence GESDTDPRFQ…ALNDLLQHIK (131 aa). The helical bundle R3 stretch occupies residues 787-911; the sequence is QHATGGQPIG…NAAAQNAIKK (125 aa). The helical bundle R4 stretch occupies residues 913 to 1043; it reads LVHKLEHAAK…RTAAQKAQEA (131 aa). A helical bundle R5 region spans residues 1045-1205; it reads GPLEIDSALG…NRCVNCLPGQ (161 aa). The tract at residues 1206 to 1356 is helical bundle R6; it reads RDVDAAIRMV…QLITMCTQQA (151 aa). The interval 1357–1452 is helical bundle R7A; the sequence is PGQKECDNAL…AYLVGVSDPN (96 aa). The segment at 1358–1658 is interaction with VCL and F-actin; it reads GQKECDNALR…NMRDKAPGQR (301 aa). The tract at residues 1460–1579 is helical bundle R8; it reads LVDPTQFARA…NLTAFASNPE (120 aa). An O-linked (GlcNAc) threonine glycan is attached at Thr-1486. A helical bundle R7B region spans residues 1580–1652; the sequence is FATVPAQISP…IKKLITNMRD (73 aa). A helical bundle R9 region spans residues 1654 to 1821; sequence APGQRECDEA…TLNEAASAAG (168 aa). A helical bundle R10 region spans residues 1822–1972; it reads VVGGMVDSIT…VLAALQAGNR (151 aa). Residue Thr-1889 is glycosylated (O-linked (GlcNAc) threonine). The helical bundle R11 stretch occupies residues 1973-2139; sequence GTQACITAAS…TVKAVEDEAT (167 aa). The tract at residues 2140–2293 is helical bundle R12; it reads KGTRALEATI…QAAEAMKGTE (154 aa). The I/LWEQ domain occupies 2292–2531; the sequence is TEWVDPEDPT…MIRQQQYKFL (240 aa). Residues 2299-2481 are helical bundle R13; it reads DPTVIAENEL…AAQKAAAFQD (183 aa).

Interacts with PIP5K1C and NRAP. Binds with high affinity to vinculin VCL and with low affinity to integrins. Interacts with APBB1IP; this inhibits VCL binding. Interacts with F-actin. Interacts with LAYN. Interacts with THSD1. In terms of processing, phosphorylated.

Its subcellular location is the cell projection. The protein localises to the ruffle membrane. It is found in the cytoplasm. It localises to the cytoskeleton. The protein resides in the cell surface. Its subcellular location is the cell junction. The protein localises to the focal adhesion. Its function is as follows. High molecular weight cytoskeletal protein concentrated at regions of cell-substratum contact and, in lymphocytes, at cell-cell contacts. Involved in connections of major cytoskeletal structures to the plasma membrane. This Gallus gallus (Chicken) protein is Talin-1 (TLN1).